Reading from the N-terminus, the 191-residue chain is Thiol:disulfide interchange protein TxlA (191 aa).

Residues 14–30 (ILVIAAALVLTILVVLG) traverse the membrane as a helical segment. The 122-residue stretch at 27 to 148 (VVLGSRQPSA…LAANLDALVE (122 aa)) folds into the Thioredoxin domain. A disulfide bridge connects residues Cys-69 and Cys-72. Residues 165 to 185 (SADLQPSRSSQTDPRSHSGQV) show a composition bias toward polar residues. Residues 165-191 (SADLQPSRSSQTDPRSHSGQVQDGVLD) form a disordered region.

Belongs to the thioredoxin family.

The protein resides in the cell membrane. Its function is as follows. Required for disulfide bond formation in some proteins. Acts by transferring its disulfide bond to other proteins and is reduced in the process. In Synechococcus elongatus (strain ATCC 33912 / PCC 7942 / FACHB-805) (Anacystis nidulans R2), this protein is Thiol:disulfide interchange protein TxlA (txlA).